A 242-amino-acid polypeptide reads, in one-letter code: Uridylate kinase (242 aa).

ATP is bound at residue 16-19 (KVSG). A UMP-binding site is contributed by Gly-58. The ATP site is built by Gly-59 and Arg-63. UMP-binding positions include Asp-78 and 139 to 146 (TGNPFCTT). Thr-166, Gln-167, Tyr-172, and Asp-175 together coordinate ATP.

The protein belongs to the UMP kinase family. Homohexamer.

Its subcellular location is the cytoplasm. It catalyses the reaction UMP + ATP = UDP + ADP. It participates in pyrimidine metabolism; CTP biosynthesis via de novo pathway; UDP from UMP (UMPK route): step 1/1. Its activity is regulated as follows. Inhibited by UTP. Its function is as follows. Catalyzes the reversible phosphorylation of UMP to UDP. This chain is Uridylate kinase, found in Rickettsia prowazekii (strain Madrid E).